The following is a 273-amino-acid chain: uncharacterized protein (273 aa).

10–34 contributes to the NAD(+) binding site; sequence VITGAATGIGQATAEVFANEGARVI. Ser142 contributes to the substrate binding site. Residue Tyr155 is the Proton acceptor of the active site.

Belongs to the short-chain dehydrogenases/reductases (SDR) family.

This is an uncharacterized protein from Bacillus subtilis (strain 168).